We begin with the raw amino-acid sequence, 463 residues long: MKSFDEMTPKEIVRELDKYIVGQTEAKKAVAIAVRNRIRRQKLPEEWRKEVLPKNILMIGPTGVGKTEIARRLAQLSGSPFLKVEATRFTEVGYVGKNVDSMIRDLVEISVNMVKQEKMKEVEERAKELVEERILDALVPESRAVPAITNPFINLITGGQQQQYTPEDRRRFRAKREEMRERLRRGELEDEEIEVEIEETASPFMGIFGPGMEDLGIEISNMFSGMLPKRKKKRKMKVSEARKVLLPMEAEKLIDMDKVIQEALDRAQNRGIIFIDEIDKIAGKESASGPDVSRQGVQRDLLPIVEGTTIMTKYGPVRTDYILFIAAGAFHVSRPSDLIPELQGRFPIRVELSPLTEEDFVRILKEPENAIIKQYQALLSTEGVELVFTEDGIREMARIAYQLNQRLENIGARRLYTVAEKVLEEISFEAPDIPEKKVVIDAEYVRKRLERIVQDEDLSAYIL.

ATP is bound by residues V21, 63 to 68 (GVGKTE), D276, E341, and R413.

This sequence belongs to the ClpX chaperone family. HslU subfamily. A double ring-shaped homohexamer of HslV is capped on each side by a ring-shaped HslU homohexamer. The assembly of the HslU/HslV complex is dependent on binding of ATP.

Its subcellular location is the cytoplasm. ATPase subunit of a proteasome-like degradation complex; this subunit has chaperone activity. The binding of ATP and its subsequent hydrolysis by HslU are essential for unfolding of protein substrates subsequently hydrolyzed by HslV. HslU recognizes the N-terminal part of its protein substrates and unfolds these before they are guided to HslV for hydrolysis. This is ATP-dependent protease ATPase subunit HslU from Thermotoga neapolitana (strain ATCC 49049 / DSM 4359 / NBRC 107923 / NS-E).